A 225-amino-acid chain; its full sequence is MDYRQLHRWDLPPEEAIKVQNELRKKIKLTPYEGEPEYVAGVDLSFPGKEEGLAVIVVLEYPSFKILEVVSERGEITFPYIPGLLAFREGPLFLKAWEKLRTKPDVVVFDGQGLAHPRKLGIASHMGLFIEIPTIGVAKSRLYGTFKMPEDKRCSWSYLYDGEEIIGCVIRTKEGSAPIFVSPGHLMDVESSKRLIKAFTLPGRRIPEPTRLAHIYTQRLKKGLF.

Mg(2+) is bound by residues Asp-43 and Asp-110. Interaction with target DNA stretches follow at residues 139 to 141 (KSR) and 214 to 221 (HIYTQRLK).

It belongs to the endonuclease V family. The cofactor is Mg(2+).

It is found in the cytoplasm. It catalyses the reaction Endonucleolytic cleavage at apurinic or apyrimidinic sites to products with a 5'-phosphate.. DNA repair enzyme involved in the repair of deaminated bases. Selectively cleaves double-stranded DNA at the second phosphodiester bond 3' to a deoxyinosine leaving behind the intact lesion on the nicked DNA. In vitro, can also cleave single-stranded substrates with inosine, double-stranded DNA with apurinic sites, or DNA sites with uracil or a mismatched base. When present in molar excess, two protein molecules can bind to the same DNA substrate and effect cleavage of both strands (in vitro). The chain is Endonuclease V from Thermotoga maritima (strain ATCC 43589 / DSM 3109 / JCM 10099 / NBRC 100826 / MSB8).